A 174-amino-acid polypeptide reads, in one-letter code: MDRRTKEQVAVELHEKVKSFKLAVLANFSGMGVAKMTTLRNDLRKSNAELKVVKNTLLRIASRDTSLEALQDDFKGPLALILGYGDPVEPSKILSDFAKKNAELELKIGMLSDKVITVEQLSALAELPSREILLAKLLSVMVGVQTQLVNVLSAVPRGLVQVLDGYRAKKEESN.

This sequence belongs to the universal ribosomal protein uL10 family. In terms of assembly, part of the ribosomal stalk of the 50S ribosomal subunit. The N-terminus interacts with L11 and the large rRNA to form the base of the stalk. The C-terminus forms an elongated spine to which L12 dimers bind in a sequential fashion forming a multimeric L10(L12)X complex.

Forms part of the ribosomal stalk, playing a central role in the interaction of the ribosome with GTP-bound translation factors. This Syntrophus aciditrophicus (strain SB) protein is Large ribosomal subunit protein uL10.